The chain runs to 534 residues: MLRRRGSPGMGVHVGAALGALWFCLTGALEVQVPEDPVVALVGTDATLCCSFSPEPGFSLAQLNLIWQLTDTKQLVHSFAEGQDQGSAYANRTALFPDLLAQGNASLRLQRVRVADEGSFTCFVSIRDFGSAAVSLQVAAPYSKPSMTLEPNKDLRPGDTVTITCSSYQGYPEAEVFWQDGQGVPLTGNVTTSQMANEQGLFDVHSILRVVLGANGTYSCLVRNPVLQQDAHSSVTITPQRSPTGAVEVQVPEDPVVALVGTDATLRCSFSPEPGFSLAQLNLIWQLTDTKQLVHSFTEGRDQGSAYANRTALFPDLLAQGNASLRLQRVRVADEGSFTCFVSIRDFGSAAVSLQVAAPYSKPSMTLEPNKDLRPGDTVTITCSSYRGYPEAEVFWQDGQGVPLTGNVTTSQMANEQGLFDVHSVLRVVLGANGTYSCLVRNPVLQQDAHGSVTITGQPMTFPPEALWVTVGLSVCLIALLVALAFVCWRKIKQSCEEENAGAEDQDGEGEGSKTALQPLKHSDSKEDDGQEIA.

The signal sequence occupies residues 1–28 (MLRRRGSPGMGVHVGAALGALWFCLTGA). One can recognise an Ig-like V-type 1 domain in the interval 29-139 (LEVQVPEDPV…GSAAVSLQVA (111 aa)). The Extracellular portion of the chain corresponds to 29–466 (LEVQVPEDPV…GQPMTFPPEA (438 aa)). Cystine bridges form between C50–C122, C165–C220, C268–C340, and C383–C438. N-linked (GlcNAc...) asparagine glycosylation is found at N104, N189, N215, N322, N407, and N433. The Ig-like C2-type 1 domain occupies 145–238 (PSMTLEPNKD…QDAHSSVTIT (94 aa)). The Ig-like V-type 2 domain maps to 243 to 357 (PTGAVEVQVP…GSAAVSLQVA (115 aa)). Residues 363–456 (PSMTLEPNKD…QDAHGSVTIT (94 aa)) form the Ig-like C2-type 2 domain. Residues 467–487 (LWVTVGLSVCLIALLVALAFV) traverse the membrane as a helical segment. Residues 488–534 (CWRKIKQSCEEENAGAEDQDGEGEGSKTALQPLKHSDSKEDDGQEIA) are Cytoplasmic-facing. Over residues 498-510 (EENAGAEDQDGEG) the composition is skewed to acidic residues. Positions 498–534 (EENAGAEDQDGEGEGSKTALQPLKHSDSKEDDGQEIA) are disordered. Residue S525 is modified to Phosphoserine.

This sequence belongs to the immunoglobulin superfamily. BTN/MOG family. As to quaternary structure, interacts with TREML2 and this interaction enhances T-cell activation. As to expression, ubiquitous but not detectable in peripheral blood lymphocytes or granulocytes. Weakly expressed in resting monocytes. Expressed in dendritic cells derived from monocytes. Expressed in epithelial cells of sinonasal tissue. Expressed in extravillous trophoblast cells and Hofbauer cells of the first trimester placenta and term placenta.

It is found in the membrane. May participate in the regulation of T-cell-mediated immune response. May play a protective role in tumor cells by inhibiting natural-killer mediated cell lysis as well as a role of marker for detection of neuroblastoma cells. May be involved in the development of acute and chronic transplant rejection and in the regulation of lymphocytic activity at mucosal surfaces. Could also play a key role in providing the placenta and fetus with a suitable immunological environment throughout pregnancy. Both isoform 1 and isoform 2 appear to be redundant in their ability to modulate CD4 T-cell responses. Isoform 2 is shown to enhance the induction of cytotoxic T-cells and selectively stimulates interferon gamma production in the presence of T-cell receptor signaling. This is CD276 antigen (CD276) from Homo sapiens (Human).